A 70-amino-acid chain; its full sequence is DNA-directed RNA polymerase subunit omega (70 aa).

Belongs to the RNA polymerase subunit omega family. In terms of assembly, the RNAP catalytic core consists of 2 alpha, 1 beta, 1 beta' and 1 omega subunit. When a sigma factor is associated with the core the holoenzyme is formed, which can initiate transcription.

The catalysed reaction is RNA(n) + a ribonucleoside 5'-triphosphate = RNA(n+1) + diphosphate. Promotes RNA polymerase assembly. Latches the N- and C-terminal regions of the beta' subunit thereby facilitating its interaction with the beta and alpha subunits. The protein is DNA-directed RNA polymerase subunit omega of Caldanaerobacter subterraneus subsp. tengcongensis (strain DSM 15242 / JCM 11007 / NBRC 100824 / MB4) (Thermoanaerobacter tengcongensis).